The chain runs to 315 residues: Putative 2-hydroxyacid dehydrogenase HI_1556 (315 aa).

NAD(+) is bound by residues Thr-73, 156 to 157, 231 to 233, and Asp-257; these read CL and TGR. Residue Arg-233 is part of the active site. Residue Glu-262 is part of the active site. Residue His-285 is the Proton donor of the active site. An NAD(+)-binding site is contributed by 285-288; that stretch reads HIAW.

The protein belongs to the D-isomer specific 2-hydroxyacid dehydrogenase family.

In Haemophilus influenzae (strain ATCC 51907 / DSM 11121 / KW20 / Rd), this protein is Putative 2-hydroxyacid dehydrogenase HI_1556.